We begin with the raw amino-acid sequence, 154 residues long: RING finger protein 11 (154 aa).

Positions 1–12 (MGNCLKSPTSDD) are enriched in polar residues. Residues 1–52 (MGNCLKSPTSDDISLLHESQSDRASFGEGTEPDQEPPPPYQEQVPVPIYHPT) form a disordered region. Gly-2 carries N-myristoyl glycine lipidation. Cys-4 is lipidated: S-palmitoyl cysteine. Ser-14 and Ser-25 each carry phosphoserine. Positions 37–40 (PPPY) match the PPxY motif motif. The segment at 99–140 (CVICMMDFVYGDPIRFLPCMHIYHLDCIDDWLMRSFTCPSCM) adopts an RING-type zinc-finger fold. The residue at position 135 (Thr-135) is a Phosphothreonine; by PKB/AKT1.

Interacts (when phosphorylated) with 14-3-3. Interacts with the E3 ubiquitin-ligases NEDD4, ITCH, SMURF2 and WWP1. Also interacts with the E2 ubiquitin-conjugating enzymes UBE2D1 and UBE2N, but neither with CDC34, nor with UBE2L3. Interacts with ZNF350, EPS15 and STAMBP. After TNF stimulation, interacts with TAX1BP1, TNFAIP3 and RIPK1; these interactions are transient and they are lost after 1 hour of stimulation with TNF. Interacts with GGA1. Post-translationally, ubiquitinated in the presence of ITCH, SMURF2 and UBE2D1, as well as WWP1. Phosphorylation by PKB/AKT1 may accelerate degradation by the proteasome. In terms of processing, acylation at both Gly-2 and Cys-4 is required for proper localization to the endosomes.

It localises to the early endosome. The protein localises to the recycling endosome. It is found in the cytoplasm. The protein resides in the nucleus. Functionally, essential component of a ubiquitin-editing protein complex, comprising also TNFAIP3, ITCH and TAX1BP1, that ensures the transient nature of inflammatory signaling pathways. Promotes the association of TNFAIP3 to RIPK1 after TNF stimulation. TNFAIP3 deubiquitinates 'Lys-63' polyubiquitin chains on RIPK1 and catalyzes the formation of 'Lys-48'-polyubiquitin chains. This leads to RIPK1 proteasomal degradation and consequently termination of the TNF- or LPS-mediated activation of NF-kappa-B. Recruits STAMBP to the E3 ubiquitin-ligase SMURF2 for ubiquitination, leading to its degradation by the 26S proteasome. This chain is RING finger protein 11 (Rnf11), found in Mus musculus (Mouse).